Consider the following 237-residue polypeptide: Prospore formation at selected spindle poles protein 1 (237 aa).

It localises to the nucleus. The protein localises to the cytoplasm. Its subcellular location is the cytoskeleton. It is found in the microtubule organizing center. The protein resides in the spindle pole body. Its function is as follows. Involved in the pathway that organizes the shaping and sizing of the prospore membrane (PSM) during sporulation. Required to localize MPC54 to all four spindle pole bodies, and localize DON1 and SPO14 to four prospore membranes. The polypeptide is Prospore formation at selected spindle poles protein 1 (PFS1) (Saccharomyces cerevisiae (strain ATCC 204508 / S288c) (Baker's yeast)).